The following is a 1234-amino-acid chain: DNA-directed RNA polymerase I subunit RPA2 (1234 aa).

The C4-type zinc finger occupies 1119 to 1150; sequence CRQCGSFLSTQPTVSPFIGKRKAVSTVRCRNC.

This sequence belongs to the RNA polymerase beta chain family. Component of the RNA polymerase I (Pol I) complex consisting of 14 subunits.

Its subcellular location is the nucleus. It is found in the nucleolus. It catalyses the reaction RNA(n) + a ribonucleoside 5'-triphosphate = RNA(n+1) + diphosphate. Its function is as follows. DNA-dependent RNA polymerase catalyzes the transcription of DNA into RNA using the four ribonucleoside triphosphates as substrates. Second largest core component of RNA polymerase I which synthesizes ribosomal RNA precursors. Proposed to contribute to the polymerase catalytic activity and forms the polymerase active center together with the largest subunit. Pol I is composed of mobile elements and RPA2 is part of the core element with the central large cleft and probably a clamp element that moves to open and close the cleft. This is DNA-directed RNA polymerase I subunit RPA2 (acr-2) from Neurospora crassa (strain ATCC 24698 / 74-OR23-1A / CBS 708.71 / DSM 1257 / FGSC 987).